The sequence spans 320 residues: Aspartate carbamoyltransferase catalytic subunit (320 aa).

Residues R57 and T58 each contribute to the carbamoyl phosphate site. An L-aspartate-binding site is contributed by K85. R107, H141, and Q144 together coordinate carbamoyl phosphate. Residues R174 and R228 each coordinate L-aspartate. Carbamoyl phosphate-binding residues include G269 and P270.

The protein belongs to the aspartate/ornithine carbamoyltransferase superfamily. ATCase family. Heterododecamer (2C3:3R2) of six catalytic PyrB chains organized as two trimers (C3), and six regulatory PyrI chains organized as three dimers (R2).

The catalysed reaction is carbamoyl phosphate + L-aspartate = N-carbamoyl-L-aspartate + phosphate + H(+). The protein operates within pyrimidine metabolism; UMP biosynthesis via de novo pathway; (S)-dihydroorotate from bicarbonate: step 2/3. In terms of biological role, catalyzes the condensation of carbamoyl phosphate and aspartate to form carbamoyl aspartate and inorganic phosphate, the committed step in the de novo pyrimidine nucleotide biosynthesis pathway. The sequence is that of Aspartate carbamoyltransferase catalytic subunit from Mycobacterium ulcerans (strain Agy99).